Consider the following 61-residue polypeptide: Type IV secretion system protein PtlI homolog (61 aa).

The first 25 residues, 1-25 (MIHAHSNARLLRWAILAIAPATLGA), serve as a signal peptide directing secretion. The segment at 29–61 (NGPPGLPYPDGKPLIPINTAAPEQGSSCQTRAP) is disordered. A compositionally biased stretch (polar residues) spans 52–61 (QGSSCQTRAP).

This chain is Type IV secretion system protein PtlI homolog (ptlI), found in Bordetella bronchiseptica (strain ATCC BAA-588 / NCTC 13252 / RB50) (Alcaligenes bronchisepticus).